The chain runs to 60 residues: Large ribosomal subunit protein bL32A (60 aa).

Positions 1–19 (MAVPKRRMSRSNTRSRRSQ) are enriched in basic residues. The disordered stretch occupies residues 1-21 (MAVPKRRMSRSNTRSRRSQWK).

Belongs to the bacterial ribosomal protein bL32 family.

The chain is Large ribosomal subunit protein bL32A from Nocardia farcinica (strain IFM 10152).